The following is a 727-amino-acid chain: Capsid protein VP1 (727 aa).

Residues 1–10 (MAPPAKRARR) are compositionally biased toward basic residues. 3 disordered regions span residues 1-38 (MAPPAKRARRGLVPPGYKYLGPGNSLDQGEPTNPSDAA), 95-120 (VLTDTPDHPSTSRPTKPTKRSKPPPH), and 141-184 (LAPM…VGIS). Residues 4 to 13 (PAKRARRGLV) carry the Nuclear localization signal motif. The segment at 19-64 (YLGPGNSLDQGEPTNPSDAAAKEHDEAYAAYLRSGKNPYLYFSPAD) is phospholipase A2-like. The segment covering 25–35 (SLDQGEPTNPS) has biased composition (polar residues). Gly residues predominate over residues 166 to 183 (SGNGSGGGGGGGSGGVGI). Residue Asn-323 participates in Mg(2+) binding. A disulfide bridge connects residues Cys-633 and Cys-637.

Belongs to the parvoviridae capsid protein family. Interacts with host TFRC.

It localises to the virion. Its subcellular location is the host nucleus. In terms of biological role, capsid protein self-assembles to form an icosahedral capsid with a T=1 symmetry, about 22 nm in diameter, and consisting of 60 copies of two size variants of the capsid proteins, VP1 and VP2, which differ by the presence of an N-terminal extension in the minor protein VP1. The capsid encapsulates the genomic ssDNA. Capsid proteins are responsible for the attachment to host cell receptors. This attachment induces virion internalization predominantly through clathrin-dependent endocytosis. Binding to the host receptors also induces capsid rearrangements leading to surface exposure of VP1 N-terminus, specifically its phospholipase A2-like region and putative nuclear localization signal(s). VP1 N-terminus might serve as a lipolytic enzyme to breach the endosomal membrane during entry into host cell and might contribute to virus transport to the nucleus. The polypeptide is Capsid protein VP1 (Feline panleukopenia virus (strain 193) (FPV)).